The primary structure comprises 431 residues: Trigger factor (431 aa).

The 86-residue stretch at 164–249 (GNIAVIDFKG…IKEIKVKELP (86 aa)) folds into the PPIase FKBP-type domain.

This sequence belongs to the FKBP-type PPIase family. Tig subfamily.

The protein localises to the cytoplasm. It carries out the reaction [protein]-peptidylproline (omega=180) = [protein]-peptidylproline (omega=0). In terms of biological role, involved in protein export. Acts as a chaperone by maintaining the newly synthesized protein in an open conformation. Functions as a peptidyl-prolyl cis-trans isomerase. The polypeptide is Trigger factor (Clostridium tetani (strain Massachusetts / E88)).